The following is a 185-amino-acid chain: Ribosome-recycling factor (185 aa).

The segment at 143–163 (RKDGEAGEDEVARAEKDLDKS) is disordered.

It belongs to the RRF family.

It is found in the cytoplasm. Responsible for the release of ribosomes from messenger RNA at the termination of protein biosynthesis. May increase the efficiency of translation by recycling ribosomes from one round of translation to another. The polypeptide is Ribosome-recycling factor (Mycobacterium marinum (strain ATCC BAA-535 / M)).